The following is a 248-amino-acid chain: Probable transcriptional regulatory protein RPA1097 (248 aa).

Residues 1–21 (MAGHSQFKNIMHRKGRQDAQR) are disordered.

It belongs to the TACO1 family.

It is found in the cytoplasm. The protein is Probable transcriptional regulatory protein RPA1097 of Rhodopseudomonas palustris (strain ATCC BAA-98 / CGA009).